We begin with the raw amino-acid sequence, 530 residues long: Ubiquitin carboxyl-terminal hydrolase 17-like protein 13 (530 aa).

The USP domain occupies 80–375 (AGLQNMGNTC…QAYVLFYIQK (296 aa)). Cysteine 89 functions as the Nucleophile in the catalytic mechanism. Catalysis depends on histidine 334, which acts as the Proton acceptor. Basic and acidic residues-rich tracts occupy residues 382 to 392 (SESVSRGREPR) and 398 to 412 (DTDRRATQGELKRDH). 2 disordered regions span residues 382–412 (SESVSRGREPRALGAEDTDRRATQGELKRDH) and 477–530 (NHHP…LVCQ). The segment covering 493–505 (TPTHQESMNTGTL) has biased composition (polar residues). Positions 510–524 (GRARRSKGKNKHSKR) are enriched in basic residues.

The protein belongs to the peptidase C19 family. USP17 subfamily.

It is found in the nucleus. The protein localises to the endoplasmic reticulum. The catalysed reaction is Thiol-dependent hydrolysis of ester, thioester, amide, peptide and isopeptide bonds formed by the C-terminal Gly of ubiquitin (a 76-residue protein attached to proteins as an intracellular targeting signal).. Deubiquitinating enzyme that removes conjugated ubiquitin from specific proteins to regulate different cellular processes that may include cell proliferation, progression through the cell cycle, apoptosis, cell migration, and the cellular response to viral infection. In Homo sapiens (Human), this protein is Ubiquitin carboxyl-terminal hydrolase 17-like protein 13 (USP17L13).